The chain runs to 58 residues: MLGWTLMFLVIAVIAGLFGFTGIAGAAAGIAKIIFFIFIVLLVISLVANAIRGKAPRA.

2 helical membrane-spanning segments follow: residues 6-26 and 27-47; these read LMFLVIAVIAGLFGFTGIAGA and AAGIAKIIFFIFIVLLVISLV.

Belongs to the UPF0391 family.

The protein resides in the cell membrane. The sequence is that of UPF0391 membrane protein Sfri_4000 from Shewanella frigidimarina (strain NCIMB 400).